Here is a 248-residue protein sequence, read N- to C-terminus: Small ribosomal subunit protein uS3 (248 aa).

Residues I39–T113 form the KH type-2 domain. The disordered stretch occupies residues E218–A248. Basic and acidic residues predominate over residues P238–A248.

The protein belongs to the universal ribosomal protein uS3 family. In terms of assembly, part of the 30S ribosomal subunit. Forms a tight complex with proteins S10 and S14.

Its function is as follows. Binds the lower part of the 30S subunit head. Binds mRNA in the 70S ribosome, positioning it for translation. The polypeptide is Small ribosomal subunit protein uS3 (Synechococcus sp. (strain JA-3-3Ab) (Cyanobacteria bacterium Yellowstone A-Prime)).